A 331-amino-acid chain; its full sequence is Phosphate acyltransferase (331 aa).

This sequence belongs to the PlsX family. Homodimer. Probably interacts with PlsY.

It localises to the cytoplasm. The enzyme catalyses a fatty acyl-[ACP] + phosphate = an acyl phosphate + holo-[ACP]. It participates in lipid metabolism; phospholipid metabolism. Catalyzes the reversible formation of acyl-phosphate (acyl-PO(4)) from acyl-[acyl-carrier-protein] (acyl-ACP). This enzyme utilizes acyl-ACP as fatty acyl donor, but not acyl-CoA. This Wolinella succinogenes (strain ATCC 29543 / DSM 1740 / CCUG 13145 / JCM 31913 / LMG 7466 / NCTC 11488 / FDC 602W) (Vibrio succinogenes) protein is Phosphate acyltransferase.